Here is a 338-residue protein sequence, read N- to C-terminus: Replication factor C subunit 3 (338 aa).

Position 57–64 (57–64) interacts with ATP; that stretch reads GPPGTGKT.

This sequence belongs to the activator 1 small subunits family. Heteropentamer of subunits RFC1, RFC2, RFC3, RFC4 and RFC5 that forms a complex with PCNA in the presence of ATP.

It is found in the nucleus. The elongation of primed DNA templates by DNA polymerase delta and epsilon requires the action of the accessory proteins proliferating cell nuclear antigen (PCNA) and activator 1. Subunit 3 binds ATP. In Blastobotrys adeninivorans (Yeast), this protein is Replication factor C subunit 3 (RFC3).